The primary structure comprises 157 residues: MSKKVVDVVSEMVQPILDGLQLELVDVEFVKEGQNWFLRVFIDSDKGVDIEECAKVSEALSEKLDEADPISQNYFLEVSSPGAERPLKKKADFEKALGKNVFMKTYEPIDGEKAFEGELTSFDGEIATVTVKIKTRKKEINIPYEKIANARLAVSFN.

It belongs to the RimP family.

Its subcellular location is the cytoplasm. Required for maturation of 30S ribosomal subunits. The polypeptide is Ribosome maturation factor RimP (Bacillus pumilus (strain SAFR-032)).